Here is a 253-residue protein sequence, read N- to C-terminus: tRNA pseudouridine synthase A (253 aa).

The Nucleophile role is filled by D53. Y112 contributes to the substrate binding site.

It belongs to the tRNA pseudouridine synthase TruA family. In terms of assembly, homodimer.

It catalyses the reaction uridine(38/39/40) in tRNA = pseudouridine(38/39/40) in tRNA. In terms of biological role, formation of pseudouridine at positions 38, 39 and 40 in the anticodon stem and loop of transfer RNAs. The protein is tRNA pseudouridine synthase A of Lactococcus lactis subsp. cremoris (strain SK11).